The following is a 482-amino-acid chain: 6-phosphogluconate dehydrogenase, decarboxylating (482 aa).

NADP(+)-binding positions include 17–22, 40–42, 82–84, and Asn-110; these read GLAVMG, NRS, and VKA. Residues Asn-110 and 136–138 contribute to the substrate site; that span reads SGG. Residue Lys-193 is the Proton acceptor of the active site. A substrate-binding site is contributed by 196 to 197; sequence HN. The active-site Proton donor is the Glu-200. Positions 201, 272, 299, 457, and 463 each coordinate substrate.

This sequence belongs to the 6-phosphogluconate dehydrogenase family. In terms of assembly, homodimer.

It carries out the reaction 6-phospho-D-gluconate + NADP(+) = D-ribulose 5-phosphate + CO2 + NADPH. Its pathway is carbohydrate degradation; pentose phosphate pathway; D-ribulose 5-phosphate from D-glucose 6-phosphate (oxidative stage): step 3/3. Catalyzes the oxidative decarboxylation of 6-phosphogluconate to ribulose 5-phosphate and CO(2), with concomitant reduction of NADP to NADPH. The chain is 6-phosphogluconate dehydrogenase, decarboxylating (gnd) from Synechocystis sp. (strain ATCC 27184 / PCC 6803 / Kazusa).